A 615-amino-acid polypeptide reads, in one-letter code: Prickle planar cell polarity protein 3 (615 aa).

Over residues 1 to 12 (MFARGSRRRRSG) the composition is skewed to basic residues. Residues 1 to 26 (MFARGSRRRRSGRAPPEAEDPDRGQP) form a disordered region. The region spanning 74-182 (SDFQRHSISD…IVRIFPVTIT (109 aa)) is the PET domain. LIM zinc-binding domains lie at 184 to 249 (AICE…CLRP), 250 to 309 (RCQA…RHAE), and 310 to 373 (YCDG…SEPT). Disordered stretches follow at residues 396 to 567 (ASFS…LGER) and 587 to 615 (TFNS…CIVA). Over residues 405–415 (SETTTKGTSTE) the composition is skewed to polar residues. 2 positions are modified to phosphoserine: Ser-475 and Ser-491. The segment covering 508 to 531 (PSRRRHHHHNHHHHHNRHPSRRRH) has biased composition (basic residues). The span at 537-555 (GSGSDSESCSSSPSSSSSE) shows a compositional bias: low complexity. Positions 606–615 (QARDKNCIVA) are enriched in basic and acidic residues.

Belongs to the prickle / espinas / testin family. Interacts with VANGL2 via its C-terminus. The VANGL2-dependent membrane recruitment of PRICKLE3 is a prerequisite for its polarization. Interacts with WTIP. WTIP is involved in the recruitment of PRICKLE3 to the basal body. Interacts with MT-ATP8, a component of the mitochondrial complex V. Widely expressed.

The protein localises to the cytoplasm. It localises to the cell membrane. Its subcellular location is the mitochondrion. Functionally, involved in the planar cell polarity (PCP) pathway that is essential for the polarization of epithelial cells during morphogenetic processes, including gastrulation and neurulation. PCP is maintained by two molecular modules, the global and the core modules, PRICKLE3 being part of the core module. Distinct complexes of the core module segregate to opposite sides of the cell, where they interact with the opposite complex in the neighboring cell at or near the adherents junctions. Involved in the organization of the basal body. Involved in cilia growth and positioning. Required for proper assembly, stability, and function of mitochondrial membrane ATP synthase (mitochondrial complex V). In Homo sapiens (Human), this protein is Prickle planar cell polarity protein 3.